The sequence spans 150 residues: METVFDINEIMKILPHRYPFLLVDRIVEHVPGERIVGIKNVTINEPFFQGHFPGHPIMPGVLIVEAMAQVGGILAYMASDDEVRNKVCYFASIDNVKFRKPVLPGDQLRIEVAATGCKRGIWCFSAKAIVKGKVTTQAELKATFADKDRL.

His51 is an active-site residue.

It belongs to the thioester dehydratase family. FabZ subfamily.

It is found in the cytoplasm. The enzyme catalyses a (3R)-hydroxyacyl-[ACP] = a (2E)-enoyl-[ACP] + H2O. Functionally, involved in unsaturated fatty acids biosynthesis. Catalyzes the dehydration of short chain beta-hydroxyacyl-ACPs and long chain saturated and unsaturated beta-hydroxyacyl-ACPs. The polypeptide is 3-hydroxyacyl-[acyl-carrier-protein] dehydratase FabZ (Geobacter metallireducens (strain ATCC 53774 / DSM 7210 / GS-15)).